We begin with the raw amino-acid sequence, 271 residues long: Collectin-11 (271 aa).

Residues 1–25 (MVGEKLVAYMLVSVLGLALLRSVFG) form the signal peptide. Positions 44–103 (GEAGEKGEKGAPGRPGRVGPTGEQGPPGDKGQKGSPGRYGKMGPTGPKGLKGDMGDPGPK) constitute a Collagen-like domain. Residues 46–112 (AGEKGEKGAP…KGPNGEPGVP (67 aa)) form a disordered region. The stretch at 124 to 148 (EMDIQVVQLTNELKFIKNAVAGIKE) forms a coiled coil. In terms of domain architecture, C-type lectin spans 149 to 265 (TDSKVYLLVK…CQLTMYFVCE (117 aa)). 2 disulfide bridges follow: C170–C264 and C242–C256. R200 contacts a carbohydrate. Ca(2+)-binding residues include D207, E211, E232, N234, N235, D238, E240, and D241. Residue E240 coordinates a carbohydrate. A carbohydrate contacts are provided by residues E244 and 252 to 254 (IDV). D253 provides a ligand contact to Ca(2+).

It belongs to the COLEC10/COLEC11 family. Homotrimer; disulfide-linked. Interacts with MASP1; probably triggers the lectin pathway of complement.

It is found in the secreted. In terms of biological role, lectin that plays a role in innate immunity, apoptosis and embryogenesis. Calcium-dependent lectin that binds self and non-self glycoproteins presenting high mannose oligosaccharides with at least one terminal alpha-1,2-linked mannose epitope. Primarily recognizes the terminal disaccharide of the glycan. Also recognizes a subset of fucosylated glycans and lipopolysaccharides. Plays a role in innate immunity through its ability to bind non-self sugars presented by microorganisms and to activate the complement through the recruitment of MAPS1. Also plays a role in apoptosis through its ability to bind in a calcium-independent manner the DNA present at the surface of apoptotic cells and to activate the complement in response to this binding. Finally, plays a role in development, probably serving as a guidance cue during the migration of neural crest cells and other cell types during embryogenesis. This Danio rerio (Zebrafish) protein is Collectin-11 (colec11).